Reading from the N-terminus, the 478-residue chain is Solute carrier family 49 member 4 (478 aa).

The segment at 1-27 (MGSGWSSEEEERQPLLGPGLGPAPGAA) is disordered. Residues 1 to 51 (MGSGWSSEEEERQPLLGPGLGPAPGAARRGREATAVLPAAGPNPGRVYGRR) are Cytoplasmic-facing. The Di-leucine motif; mediates lysosomal localization signature appears at 15 to 16 (LL). A helical transmembrane segment spans residues 52-72 (WLVLLLFSLLAFAQGLVWNTW). Over 73 to 89 (GPIQNSARQAYGFSGWD) the chain is Lumenal. The chain crosses the membrane as a helical span at residues 90 to 110 (IALLVLWGPIGFLPCFAFMWL). At 111–117 (LDKRGLR) the chain is on the cytoplasmic side. Residues 118–138 (VTVLLTSFLMVLGTGLRCIPV) form a helical membrane-spanning segment. The Lumenal portion of the chain corresponds to 139–152 (SDLALKKRLIHGGQ). Residues 153–173 (ILNGLAGPTVMNAAPFLSTTW) traverse the membrane as a helical segment. Topologically, residues 174-184 (FSADERATATA) are cytoplasmic. A helical transmembrane segment spans residues 185 to 205 (IASMLSYLGGACAFLVGPLVV). The Lumenal portion of the chain corresponds to 206-229 (PAPNGTAPLLAAESSRAHIKDRIE). An N-linked (GlcNAc...) asparagine glycan is attached at asparagine 209. The helical transmembrane segment at 230–250 (TVLYAEFGVVCLIFSATLAYF) threads the bilayer. At 251-281 (PPRPPLPPSVAAASQRLSYRRSFCRLLSNLR) the chain is on the cytoplasmic side. The helical transmembrane segment at 282 to 302 (FLMIALAYAIPLGVFAGWSGV) threads the bilayer. Residues 303 to 314 (LDLILTPVHVSQ) lie on the Lumenal side of the membrane. Residues 315 to 335 (VDAGWIGFWSIVGGCVVGIAM) form a helical membrane-spanning segment. Topologically, residues 336–347 (ARFADFIRGMLK) are cytoplasmic. A helical transmembrane segment spans residues 348–368 (LILLLLFSGATLSSTWFTLTC). The Lumenal portion of the chain corresponds to 369–384 (LNSITHLPLTTVTLYA). Residues 385–405 (SCILLGVFLNSSVPIFFELFV) form a helical membrane-spanning segment. Residues 406–414 (ETVYPVPEG) are Cytoplasmic-facing. Residues 415–435 (ITCGVVTFLSNMFMGVLLFFV) form a helical membrane-spanning segment. The Lumenal portion of the chain corresponds to 436 to 442 (TFYHTEL). A helical membrane pass occupies residues 443–463 (SWFNWCLPGSCLLSLLLILCF). Topologically, residues 464-478 (RESYDRLYLDVVVSV) are cytoplasmic.

The protein belongs to the major facilitator superfamily. Cleaved in lysosomes by cathepsin L between Leu-214 and Ala-261, generating a N-glycosylated N-terminal and a non-glycosylated C-terminal fragment.

The protein localises to the lysosome membrane. The catalysed reaction is pyridoxine(out) + n H(+)(out) = pyridoxine(in) + n H(+)(in). Its function is as follows. Mediates H(+)-dependent pyridoxine transport. In Mus musculus (Mouse), this protein is Solute carrier family 49 member 4 (Slc49a4).